The following is a 158-amino-acid chain: Non-secretory ribonuclease (158 aa).

The first 27 residues, 1–27 (MVPKLFTSQICLLPLLGLLSAEGSPHA), serve as a signal peptide directing secretion. His42 serves as the catalytic Proton acceptor. Tyr60 bears the 3'-nitrotyrosine mark. A substrate-binding site is contributed by 65-69 (KNKNT). 3 N-linked (GlcNAc...) asparagine glycosylation sites follow: Asn86, Asn92, and Asn111. The active-site Proton donor is His153.

It belongs to the pancreatic ribonuclease family. Interacts with and forms a tight 1:1 complex with RNH1. Dimerization of two such complexes may occur.

Its subcellular location is the lysosome. The protein resides in the cytoplasmic granule. It catalyses the reaction an [RNA] containing cytidine + H2O = an [RNA]-3'-cytidine-3'-phosphate + a 5'-hydroxy-ribonucleotide-3'-[RNA].. The enzyme catalyses an [RNA] containing uridine + H2O = an [RNA]-3'-uridine-3'-phosphate + a 5'-hydroxy-ribonucleotide-3'-[RNA].. Its function is as follows. This is a non-secretory ribonuclease. It is a pyrimidine specific nuclease with a slight preference for U. Cytotoxin and helminthotoxin. Possesses a wide variety of biological activities. The polypeptide is Non-secretory ribonuclease (RNASE2) (Callithrix jacchus (White-tufted-ear marmoset)).